The following is a 141-amino-acid chain: Lutropin subunit beta (141 aa).

An N-terminal signal peptide occupies residues 1 to 20; sequence MEMFQGLLLWLLLGVAGVWA. 6 disulfide bridges follow: Cys29–Cys77, Cys43–Cys92, Cys46–Cys130, Cys54–Cys108, Cys58–Cys110, and Cys113–Cys120. N-linked (GlcNAc...) asparagine glycosylation occurs at Asn33.

It belongs to the glycoprotein hormones subunit beta family. Heterodimer of a common alpha chain and a unique beta chain which confers biological specificity to thyrotropin, lutropin, follitropin and gonadotropin.

It localises to the secreted. Its function is as follows. Promotes spermatogenesis and ovulation by stimulating the testes and ovaries to synthesize steroids. The sequence is that of Lutropin subunit beta (LHB) from Bos taurus (Bovine).